The primary structure comprises 419 residues: L-rhamnose isomerase (419 aa).

Residues His-262, Asp-294, and Asp-296 each contribute to the Mn(2+) site.

It belongs to the rhamnose isomerase family. As to quaternary structure, homotetramer. Mn(2+) serves as cofactor.

Its subcellular location is the cytoplasm. The catalysed reaction is L-rhamnopyranose = L-rhamnulose. The protein operates within carbohydrate degradation; L-rhamnose degradation; glycerone phosphate from L-rhamnose: step 1/3. In terms of biological role, catalyzes the interconversion of L-rhamnose and L-rhamnulose. The protein is L-rhamnose isomerase of Escherichia fergusonii (strain ATCC 35469 / DSM 13698 / CCUG 18766 / IAM 14443 / JCM 21226 / LMG 7866 / NBRC 102419 / NCTC 12128 / CDC 0568-73).